Here is a 279-residue protein sequence, read N- to C-terminus: HTH-type transcriptional regulator HdfR (279 aa).

The HTH lysR-type domain occupies 1–58 (MDTELLKTFLEVSRTRHFGRAAESLYLTQSAVSFRIRQLENQLGVNLFTRHRNNIRLT). A DNA-binding region (H-T-H motif) is located at residues 18–37 (FGRAAESLYLTQSAVSFRIR).

The protein belongs to the LysR transcriptional regulatory family.

Functionally, negatively regulates the transcription of the flagellar master operon flhDC by binding to the upstream region of the operon. The sequence is that of HTH-type transcriptional regulator HdfR from Escherichia coli O17:K52:H18 (strain UMN026 / ExPEC).